The primary structure comprises 445 residues: METIFAQSSAFGKAGVAVFRISGPKSLEVLQLLTGRKDFKSRLMYYQQITVPETKELIDNVMVVYFKSPGSFTGEDVVEIHTHGSKAISIMLTNALLNIAGIRLAEAGEFTKRAFLNNKFDLTAAEGIADLINAETIMQHKQAIRQASGKLEALYNNWRSQLLKMLSLLEAYIDFPDEDIPDTVLNEVTNTHTILVNTISEYLNDNRKGELLRSGLKLAIIGPPNVGKSSLLNFLMQRDIAIVSNIAGTTRDIIEGHLDIGGYPIILQDTAGIREESSDIIEQEGIKRAINSAKTADIKIIMFDAEKLDSSINEDIINLIDENTITIINKIDLIEASKIFSIENKYKCLRVSVKNNIALSSILKNIENIAENMAGFTETPYITNQRHRNYLQQALSHLTAFSLDNDLVLATEDIRMTARCIGAITGVINVEEILGEIFKNFCIGK.

(6S)-5-formyl-5,6,7,8-tetrahydrofolate contacts are provided by Arg20, Glu79, and Lys119. The 157-residue stretch at 215–371 (GLKLAIIGPP…ILKNIENIAE (157 aa)) folds into the TrmE-type G domain. Asn225 lines the K(+) pocket. Residues 225–230 (NVGKSS), 244–250 (SNIAGTT), and 269–272 (DTAG) contribute to the GTP site. Ser229 is a Mg(2+) binding site. The K(+) site is built by Ser244, Ile246, and Thr249. Thr250 is a Mg(2+) binding site. Lys445 contacts (6S)-5-formyl-5,6,7,8-tetrahydrofolate.

Belongs to the TRAFAC class TrmE-Era-EngA-EngB-Septin-like GTPase superfamily. TrmE GTPase family. As to quaternary structure, homodimer. Heterotetramer of two MnmE and two MnmG subunits. The cofactor is K(+).

The protein localises to the cytoplasm. Its function is as follows. Exhibits a very high intrinsic GTPase hydrolysis rate. Involved in the addition of a carboxymethylaminomethyl (cmnm) group at the wobble position (U34) of certain tRNAs, forming tRNA-cmnm(5)s(2)U34. This Rickettsia conorii (strain ATCC VR-613 / Malish 7) protein is tRNA modification GTPase MnmE.